Here is a 105-residue protein sequence, read N- to C-terminus: Large ribosomal subunit protein uL24 (105 aa).

It belongs to the universal ribosomal protein uL24 family. As to quaternary structure, part of the 50S ribosomal subunit.

Functionally, one of two assembly initiator proteins, it binds directly to the 5'-end of the 23S rRNA, where it nucleates assembly of the 50S subunit. In terms of biological role, one of the proteins that surrounds the polypeptide exit tunnel on the outside of the subunit. This is Large ribosomal subunit protein uL24 from Vibrio parahaemolyticus serotype O3:K6 (strain RIMD 2210633).